The following is a 145-amino-acid chain: Transcription antitermination protein NusB (145 aa).

The protein belongs to the NusB family.

Involved in transcription antitermination. Required for transcription of ribosomal RNA (rRNA) genes. Binds specifically to the boxA antiterminator sequence of the ribosomal RNA (rrn) operons. The protein is Transcription antitermination protein NusB of Burkholderia ambifaria (strain MC40-6).